Reading from the N-terminus, the 481-residue chain is Argininosuccinate lyase (481 aa).

The protein belongs to the lyase 1 family. Argininosuccinate lyase subfamily.

The protein resides in the cytoplasm. It catalyses the reaction 2-(N(omega)-L-arginino)succinate = fumarate + L-arginine. It participates in amino-acid biosynthesis; L-arginine biosynthesis; L-arginine from L-ornithine and carbamoyl phosphate: step 3/3. This chain is Argininosuccinate lyase, found in Methanococcus maripaludis (strain C5 / ATCC BAA-1333).